Consider the following 521-residue polypeptide: Ribonuclease Y (521 aa).

A helical transmembrane segment spans residues 1–21 (MFFIEHPFVYLGLDLIVGCLI). Residues 211–271 (TVSMVPLPSD…VRREVARLAL (61 aa)) enclose the KH domain. The region spanning 337-430 (VLQHSLEVAF…VQAADALSGA (94 aa)) is the HD domain.

Belongs to the RNase Y family.

Its subcellular location is the cell membrane. Functionally, endoribonuclease that initiates mRNA decay. The chain is Ribonuclease Y from Desulfotalea psychrophila (strain LSv54 / DSM 12343).